A 427-amino-acid chain; its full sequence is Serine--tRNA ligase 2 (427 aa).

Basic and acidic residues predominate over residues 35–53 (RRRSEAQAEVTRLRTELNR). The interval 35-72 (RRRSEAQAEVTRLRTELNRTSRARGRSGPPSEEEKEAA) is disordered. Residue 230–232 (TAE) participates in L-serine binding. Position 261-263 (261-263 (RAE)) interacts with ATP. L-serine is bound at residue glutamate 284. Position 348 to 351 (348 to 351 (EISS)) interacts with ATP. Serine 383 contacts L-serine.

Belongs to the class-II aminoacyl-tRNA synthetase family. Type-1 seryl-tRNA synthetase subfamily. Homodimer. The tRNA molecule binds across the dimer.

It localises to the cytoplasm. It carries out the reaction tRNA(Ser) + L-serine + ATP = L-seryl-tRNA(Ser) + AMP + diphosphate + H(+). The enzyme catalyses tRNA(Sec) + L-serine + ATP = L-seryl-tRNA(Sec) + AMP + diphosphate + H(+). It participates in aminoacyl-tRNA biosynthesis; selenocysteinyl-tRNA(Sec) biosynthesis; L-seryl-tRNA(Sec) from L-serine and tRNA(Sec): step 1/1. Functionally, catalyzes the attachment of serine to tRNA(Ser). Is also able to aminoacylate tRNA(Sec) with serine, to form the misacylated tRNA L-seryl-tRNA(Sec), which will be further converted into selenocysteinyl-tRNA(Sec). The chain is Serine--tRNA ligase 2 from Streptomyces avermitilis (strain ATCC 31267 / DSM 46492 / JCM 5070 / NBRC 14893 / NCIMB 12804 / NRRL 8165 / MA-4680).